A 384-amino-acid polypeptide reads, in one-letter code: Galactokinase (384 aa).

35–38 (EHTD) contacts substrate. ATP contacts are provided by residues S69 and 125-131 (GAGLSSS). Residues S131 and E163 each contribute to the Mg(2+) site. The active-site Proton acceptor is D175. Residue Y224 participates in substrate binding.

It belongs to the GHMP kinase family. GalK subfamily.

The protein resides in the cytoplasm. The enzyme catalyses alpha-D-galactose + ATP = alpha-D-galactose 1-phosphate + ADP + H(+). The protein operates within carbohydrate metabolism; galactose metabolism. In terms of biological role, catalyzes the transfer of the gamma-phosphate of ATP to D-galactose to form alpha-D-galactose-1-phosphate (Gal-1-P). The protein is Galactokinase of Aliivibrio fischeri (strain MJ11) (Vibrio fischeri).